The sequence spans 63 residues: Large ribosomal subunit protein uL29 (63 aa).

It belongs to the universal ribosomal protein uL29 family.

In Shigella flexneri, this protein is Large ribosomal subunit protein uL29.